The primary structure comprises 245 residues: tRNA pseudouridine synthase A (245 aa).

The Nucleophile role is filled by D52. Position 111 (Y111) interacts with substrate.

This sequence belongs to the tRNA pseudouridine synthase TruA family. Homodimer.

It catalyses the reaction uridine(38/39/40) in tRNA = pseudouridine(38/39/40) in tRNA. Formation of pseudouridine at positions 38, 39 and 40 in the anticodon stem and loop of transfer RNAs. The protein is tRNA pseudouridine synthase A of Rickettsia bellii (strain RML369-C).